A 538-amino-acid polypeptide reads, in one-letter code: CTP synthase (538 aa).

Residues 1–270 are amidoligase domain; the sequence is MSRTKFIFVT…DEVVLKTMGM (270 aa). Ser-15 is a binding site for CTP. Ser-15 serves as a coordination point for UTP. 16-21 is a binding site for ATP; it reads SLGKGV. Tyr-56 provides a ligand contact to L-glutamine. Asp-73 is an ATP binding site. Mg(2+) is bound by residues Asp-73 and Glu-143. Residues 150 to 152, 190 to 195, and Lys-226 each bind CTP; these read DIE and KTKPTQ. UTP-binding positions include 190–195 and Lys-226; that span reads KTKPTQ. The Glutamine amidotransferase type-1 domain occupies 295 to 537; the sequence is QIAVVGKYIS…IRASVKYSKK (243 aa). Gly-357 contacts L-glutamine. The Nucleophile; for glutamine hydrolysis role is filled by Cys-384. L-glutamine is bound by residues 385–388, Glu-408, and Arg-465; that span reads LGMQ. Catalysis depends on residues His-510 and Glu-512.

This sequence belongs to the CTP synthase family. In terms of assembly, homotetramer.

It carries out the reaction UTP + L-glutamine + ATP + H2O = CTP + L-glutamate + ADP + phosphate + 2 H(+). It catalyses the reaction L-glutamine + H2O = L-glutamate + NH4(+). The enzyme catalyses UTP + NH4(+) + ATP = CTP + ADP + phosphate + 2 H(+). It participates in pyrimidine metabolism; CTP biosynthesis via de novo pathway; CTP from UDP: step 2/2. Its activity is regulated as follows. Allosterically activated by GTP, when glutamine is the substrate; GTP has no effect on the reaction when ammonia is the substrate. The allosteric effector GTP functions by stabilizing the protein conformation that binds the tetrahedral intermediate(s) formed during glutamine hydrolysis. Inhibited by the product CTP, via allosteric rather than competitive inhibition. Its function is as follows. Catalyzes the ATP-dependent amination of UTP to CTP with either L-glutamine or ammonia as the source of nitrogen. Regulates intracellular CTP levels through interactions with the four ribonucleotide triphosphates. This chain is CTP synthase, found in Leptospira interrogans serogroup Icterohaemorrhagiae serovar copenhageni (strain Fiocruz L1-130).